The following is a 495-amino-acid chain: Fusicoccadiene 8-ol C-16 hydroxylase (495 aa).

The helical transmembrane segment at 12–32 (VLLALIVWIGTTIIYNIYFHP) threads the bilayer. Asn-249 and Asn-317 each carry an N-linked (GlcNAc...) asparagine glycan. Position 439 (Cys-439) interacts with heme.

The protein belongs to the cytochrome P450 family. The cofactor is heme.

It is found in the membrane. It participates in mycotoxin biosynthesis. Functionally, cytochrome P450 monooxygenase; part of the gene cluster that mediates the biosynthesis of the diterpene glucoside brassicicene C. In the first step of the brassicicene C biosynthesis, the bifunctional diterpene synthase bsc8 that possesses both prenyl transferase and terpene cyclase activity, converts isopentenyl diphosphate and dimethylallyl diphosphate into geranylgeranyl diphosphate (GGDP) that is further converted into fusicocca-2,10(14)-diene, the first precursor for brassicicene C. Fusicocca-2,10(14)-diene is then substrate of cytochrome P450 monooxygenase bsc1 for hydroxylation at the C-8 position. Oxidation at C-16 position to aldehyde is then catalyzed by the cytochrome P450 monooyxygenase bsc7, yielding fusicocca-2,10(14)-diene-8-beta,16-diol. Follows the isomerization of the double bond and reduction of aldehyde to alcohol catalyzed by the short-chain dehydrogenase/reductase bsc3 to yield the diol compound fusicocca-1,10(14)-diene-8 beta,16-diol. The next step is the oxidation at the C-3 position of fusicocca-2,10(14)-diene-8-beta,16-diol catalyzed by the alpha-ketoglutarate dependent dioxygenase bsc9, to produce a triol compound. Methylation of the hydroxy group at position 16 is performed by the methyltransferase bsc6. 16-O-methylation is followed by oxidation at the C-13 position to ketone and an alkyl shift of the methyl group leads to brassicicene C. Although the probable acetyltransferase bsc4 is included in the gene cluster, no acetylation reactions are necessary for brassicicene C biosynthesis. However, the fact that brassicicene E, which is a structurally related compound having an acetoxy group at position 12, was previously isolated from another strain of A.brassicicola suggests that the ATCC 96836 strain might also produce a small amount of brassicicene E. The protein is Fusicoccadiene 8-ol C-16 hydroxylase of Alternaria brassicicola (Dark leaf spot agent).